Here is a 250-residue protein sequence, read N- to C-terminus: Small ribosomal subunit protein uS3 (250 aa).

Residues 39–109 (IRNYVQARLK…EVKIDVVEVI (71 aa)) enclose the KH type-2 domain. Residues 225–239 (INERRGDSKSRPRDP) are compositionally biased toward basic and acidic residues. A disordered region spans residues 225–250 (INERRGDSKSRPRDPRNKRRRRTKRS). Basic residues predominate over residues 240 to 250 (RNKRRRRTKRS).

The protein belongs to the universal ribosomal protein uS3 family. As to quaternary structure, part of the 30S ribosomal subunit. Forms a tight complex with proteins S10 and S14.

Its function is as follows. Binds the lower part of the 30S subunit head. Binds mRNA in the 70S ribosome, positioning it for translation. This Chlorobium phaeobacteroides (strain DSM 266 / SMG 266 / 2430) protein is Small ribosomal subunit protein uS3.